The sequence spans 258 residues: UPF0246 protein HS_0482 (258 aa).

Belongs to the UPF0246 family.

This chain is UPF0246 protein HS_0482, found in Histophilus somni (strain 129Pt) (Haemophilus somnus).